The following is a 157-amino-acid chain: 6,7-dimethyl-8-ribityllumazine synthase 1 (157 aa).

5-amino-6-(D-ribitylamino)uracil is bound by residues Phe-22, 53–55 (ALE), and 82–84 (TVI). 87–88 (ET) contributes to the (2S)-2-hydroxy-3-oxobutyl phosphate binding site. The active-site Proton donor is His-90. Asn-115 contributes to the 5-amino-6-(D-ribitylamino)uracil binding site. Residue His-129 coordinates (2S)-2-hydroxy-3-oxobutyl phosphate.

The protein belongs to the DMRL synthase family. As to quaternary structure, homopentamer.

It catalyses the reaction (2S)-2-hydroxy-3-oxobutyl phosphate + 5-amino-6-(D-ribitylamino)uracil = 6,7-dimethyl-8-(1-D-ribityl)lumazine + phosphate + 2 H2O + H(+). Its pathway is cofactor biosynthesis; riboflavin biosynthesis; riboflavin from 2-hydroxy-3-oxobutyl phosphate and 5-amino-6-(D-ribitylamino)uracil: step 1/2. Catalyzes the formation of 6,7-dimethyl-8-ribityllumazine by condensation of 5-amino-6-(D-ribitylamino)uracil with 3,4-dihydroxy-2-butanone 4-phosphate. This is the penultimate step in the biosynthesis of riboflavin. In Brucella abortus (strain 2308), this protein is 6,7-dimethyl-8-ribityllumazine synthase 1 (ribH1).